Reading from the N-terminus, the 232-residue chain is Probable caffeoyl-CoA O-methyltransferase At4g26220 (232 aa).

K7 lines the substrate pocket. Residues T49, E71, 73–74 (GV), S79, D97, and A126 each bind S-adenosyl-L-methionine. D149 contacts substrate. D149 contributes to the a divalent metal cation binding site. An S-adenosyl-L-methionine-binding site is contributed by D151. A divalent metal cation contacts are provided by D175 and N176.

This sequence belongs to the class I-like SAM-binding methyltransferase superfamily. Cation-dependent O-methyltransferase family. CCoAMT subfamily. A divalent metal cation serves as cofactor.

It carries out the reaction (E)-caffeoyl-CoA + S-adenosyl-L-methionine = (E)-feruloyl-CoA + S-adenosyl-L-homocysteine + H(+). Its pathway is aromatic compound metabolism; phenylpropanoid biosynthesis. Its function is as follows. Methylates caffeoyl-CoA to feruloyl-CoA and 5-hydroxyferuloyl-CoA to sinapoyl-CoA. Plays a role in the synthesis of feruloylated polysaccharides. Involved in the reinforcement of the plant cell wall. Also involved in the responding to wounding or pathogen challenge by the increased formation of cell wall-bound ferulic acid polymers. The chain is Probable caffeoyl-CoA O-methyltransferase At4g26220 from Arabidopsis thaliana (Mouse-ear cress).